Reading from the N-terminus, the 40-residue chain is Lucifensin (40 aa).

Disulfide bonds link cysteine 3/cysteine 30, cysteine 16/cysteine 36, and cysteine 20/cysteine 38.

This sequence belongs to the invertebrate defensin family. Type 1 subfamily. The disulfide bonds are essential for antimicrobial activity. Larval fat body, hemolymph and salivary glands (at protein level).

It is found in the secreted. In terms of biological role, shows strong antibacterial activity against the Gram-positive bacterium M.luteus. Also shows antibacterial activity against the Gram-positive bacteria E.fecalis, S.aureus, S.carnosus, S.pneumoniae and S.pyogenes and against a number of methicillin-resistant S.aureus and glycopeptide-intermediate S.aureus isolates. Does not show antibacterial activity against Gram-negative bacteria or antifungal activity against C.utilis. Shows slight antifungal activity against C.albicans. In Lucilia cuprina (Green bottle fly), this protein is Lucifensin.